Reading from the N-terminus, the 237-residue chain is Ubiquinone biosynthesis O-methyltransferase (237 aa).

The S-adenosyl-L-methionine site is built by arginine 38, glycine 58, aspartate 79, and methionine 124.

This sequence belongs to the methyltransferase superfamily. UbiG/COQ3 family.

It carries out the reaction a 3-demethylubiquinol + S-adenosyl-L-methionine = a ubiquinol + S-adenosyl-L-homocysteine + H(+). The catalysed reaction is a 3-(all-trans-polyprenyl)benzene-1,2-diol + S-adenosyl-L-methionine = a 2-methoxy-6-(all-trans-polyprenyl)phenol + S-adenosyl-L-homocysteine + H(+). The protein operates within cofactor biosynthesis; ubiquinone biosynthesis. Functionally, O-methyltransferase that catalyzes the 2 O-methylation steps in the ubiquinone biosynthetic pathway. The sequence is that of Ubiquinone biosynthesis O-methyltransferase from Acinetobacter baumannii (strain AB307-0294).